The chain runs to 501 residues: Phenylalanine--tRNA ligase alpha subunit (501 aa).

L-phenylalanine-binding residues include threonine 340 and phenylalanine 423. Glutamate 425 contacts Mg(2+). Phenylalanine 448 serves as a coordination point for L-phenylalanine.

The protein belongs to the class-II aminoacyl-tRNA synthetase family. Phe-tRNA synthetase alpha subunit type 2 subfamily. Tetramer of two alpha and two beta subunits. The cofactor is Mg(2+).

It is found in the cytoplasm. It carries out the reaction tRNA(Phe) + L-phenylalanine + ATP = L-phenylalanyl-tRNA(Phe) + AMP + diphosphate + H(+). This chain is Phenylalanine--tRNA ligase alpha subunit, found in Methanococcus maripaludis (strain C5 / ATCC BAA-1333).